A 382-amino-acid chain; its full sequence is GDSL esterase/lipase At4g01130 (382 aa).

Residues 1 to 28 (MASDINRRRSFSLLVLIIVMLYGHKGDS) form the signal peptide. Serine 41 (nucleophile) is an active-site residue. N-linked (GlcNAc...) asparagine glycosylation is found at asparagine 118, asparagine 263, asparagine 275, and asparagine 330. Catalysis depends on residues aspartate 348 and histidine 351.

The protein belongs to the 'GDSL' lipolytic enzyme family.

Its subcellular location is the secreted. This chain is GDSL esterase/lipase At4g01130, found in Arabidopsis thaliana (Mouse-ear cress).